The sequence spans 761 residues: Membrane protein of ER body-like protein (761 aa).

Disordered regions lie at residues 1–85 (MGSA…GEHT) and 120–162 (GSES…RSRE). Over residues 22 to 31 (EVEEDDEQIV) the composition is skewed to acidic residues. Residues 48–65 (VDSSTITNTSSSSSSSFS) are compositionally biased toward low complexity. Positions 74 to 85 (PDFHSNGDGEHT) are enriched in basic and acidic residues. Polar residues predominate over residues 136–154 (TADLNGEQTQLEPENGSTS). The stretch at 186 to 206 (IEEEVDFEDVEYHDVENMMDK) forms a coiled coil. Disordered regions lie at residues 338–374 (SSSVLEANPPPRESIVPVVNPSRGNLSPMRKDTTGSA) and 416–448 (QTQQKIDNDDSSTADGNHTSDKGRLSPIQPSHG). The segment covering 416–432 (QTQQKIDNDDSSTADGN) has biased composition (polar residues). Transmembrane regions (helical) follow at residues 549-569 (IVYGGLLEAITSLGVISSAAG), 573-593 (SMLNILVLGLANLLGGLILII), 640-660 (VAILSFIITGILPPVVYYFSF), 670-690 (VASVFGASLFCIVLLAIAKAH), and 702-722 (ILYYGSIAVSVSGISYVVGNF).

It belongs to the CCC1 family.

It localises to the endoplasmic reticulum membrane. In terms of biological role, not essential for the accumulation of ER body components, including PYK10. The protein is Membrane protein of ER body-like protein (MEBL) of Arabidopsis thaliana (Mouse-ear cress).